A 258-amino-acid polypeptide reads, in one-letter code: Ciliogenesis and planar polarity effector 2 (258 aa).

The interval 51-258 (IDTASYKIFV…LPSSPESAPG (208 aa)) is small GTPase-like. GTP contacts are provided by S64, G65, G67, K68, T69, A70, I82, H84, T87, K176, D178, and S206.

Belongs to the small GTPase superfamily. Rab family. Interacts with FUZ. Associates with the CPLANE (ciliogenesis and planar polarity effectors) complex via its interaction with FUZ.

It is found in the cytoplasm. The protein localises to the cytoskeleton. Its subcellular location is the cilium basal body. It localises to the microtubule organizing center. The protein resides in the centrosome. It is found in the centriole. Functionally, required for efficient primary cilia initiation, regulating a late step in cilia initiation. Plays a role in the final maturation of the mother centriole and ciliary vesicle that allows extension of the ciliary axoneme. The sequence is that of Ciliogenesis and planar polarity effector 2 (Cplane2) from Mus musculus (Mouse).